A 457-amino-acid chain; its full sequence is MLGAVKMEGHEPSDWSSYYAEPEGYSSVSNMNAGLGMNGMNTYMSMSAAAMGSGSGNMSAGSMNMSSYVGAGMSPSLAGMSPGAGAMAGMGGSAGAAGVAGMGPHLSPSLSPLGGQAAGAMGGLAPYANMNSMSPMYGQAGLSRARDPKTYRRSYTHAKPPYSYISLITMAIQQSPNKMLTLSEIYQWIMDLFPFYRQNQQRWQNSIRHSLSFNDCFLKVPRSPDKPGKGSFWTLHPDSGNMFENGCYLRRQKRFKCEKQLALKEAAGAAGSGKKAAAGAQASQAQLGEAAGPASETPAGTESPHSSASPCQEHKRGGLGELKGTPAAALSPPEPAPSPGQQQQAAAHLLGPPHHPGLPPEAHLKPEHHYAFNHPFSINNLMSSEQQHHHSHHHHQPHKMDLKAYEQVMHYPGYGSPMPGSLAMGPVTNKTGLDASPLAADTSYYQGVYSRPIMNSS.

Residues 14-93 form a transactivation domain 1 region; sequence DWSSYYAEPE…AGAMAGMGGS (80 aa). The short motif at 106–113 is the Nuclear localization signal element; that stretch reads LSPSLSPL. Threonine 156 bears the Phosphothreonine mark. Residues 159 to 252 constitute a DNA-binding region (fork-head); the sequence is KPPYSYISLI…FENGCYLRRQ (94 aa). Phosphoserine occurs at positions 212 and 283. A compositionally biased stretch (low complexity) spans 280-292; it reads AQASQAQLGEAAG. The interval 280–365 is disordered; sequence AQASQAQLGE…PGLPPEAHLK (86 aa). Residues 298 to 310 show a composition bias toward polar residues; that stretch reads PAGTESPHSSASP. Threonine 301 is subject to Phosphothreonine. Serine 303, serine 306, serine 307, and serine 309 each carry phosphoserine. Positions 339–352 are enriched in low complexity; it reads PGQQQQAAAHLLGP. Residues 361-457 are transactivation domain 2; the sequence is EAHLKPEHHY…VYSRPIMNSS (97 aa). Serine 436 and serine 457 each carry phosphoserine.

Binds DNA as a monomer. Binds TLE1. Interacts with FOXA1 and FOXA3. Interacts with PRKDC. Interacts with AKT1. Interacts with TET1; this interaction may recruit TET1 to specific genomic loci to mediate their demethylation. Post-translationally, phosphorylation on Thr-156 abolishes binding to target promoters and subsequent transcription activation upon insulin stimulation.

It localises to the nucleus. Its subcellular location is the cytoplasm. Transcription factor that is involved in embryonic development, establishment of tissue-specific gene expression and regulation of gene expression in differentiated tissues. Is thought to act as a 'pioneer' factor opening the compacted chromatin for other proteins through interactions with nucleosomal core histones and thereby replacing linker histones at target enhancer and/or promoter sites. Binds DNA with the consensus sequence 5'-[AC]A[AT]T[AG]TT[GT][AG][CT]T[CT]-3'. In embryonic development is required for notochord formation. Involved in the development of multiple endoderm-derived organ systems such as the liver, pancreas and lungs; FOXA1 and FOXA2 seem to have at least in part redundant roles. Originally described as a transcription activator for a number of liver genes such as AFP, albumin, tyrosine aminotransferase, PEPCK, etc. Interacts with the cis-acting regulatory regions of these genes. Involved in glucose homeostasis; regulates the expression of genes important for glucose sensing in pancreatic beta-cells and glucose homeostasis. Involved in regulation of fat metabolism. Binds to fibrinogen beta promoter and is involved in IL6-induced fibrinogen beta transcriptional activation. This Homo sapiens (Human) protein is Hepatocyte nuclear factor 3-beta (FOXA2).